The chain runs to 246 residues: Peptide methionine sulfoxide reductase (246 aa).

C48 acts as the Cysteine sulfenic acid (-SOH) intermediate in catalysis. C48 and C246 form a disulfide bridge.

In terms of processing, conjugated to URM1, a ubiquitin-like protein.

The enzyme catalyses L-methionyl-[protein] + [thioredoxin]-disulfide + H2O = L-methionyl-(S)-S-oxide-[protein] + [thioredoxin]-dithiol. It carries out the reaction [thioredoxin]-disulfide + L-methionine + H2O = L-methionine (S)-S-oxide + [thioredoxin]-dithiol. Its function is as follows. Has an important function as a repair enzyme for proteins that have been inactivated by oxidation. Catalyzes the reduction of methionine sulfoxide in proteins to methionine. Does not catalyze the reverse reaction involving the oxidation of methionine residues. The protein is Peptide methionine sulfoxide reductase of Drosophila melanogaster (Fruit fly).